A 251-amino-acid chain; its full sequence is Imidazole glycerol phosphate synthase subunit HisF (251 aa).

Active-site residues include Asp-11 and Asp-130.

The protein belongs to the HisA/HisF family. In terms of assembly, heterodimer of HisH and HisF.

The protein localises to the cytoplasm. It carries out the reaction 5-[(5-phospho-1-deoxy-D-ribulos-1-ylimino)methylamino]-1-(5-phospho-beta-D-ribosyl)imidazole-4-carboxamide + L-glutamine = D-erythro-1-(imidazol-4-yl)glycerol 3-phosphate + 5-amino-1-(5-phospho-beta-D-ribosyl)imidazole-4-carboxamide + L-glutamate + H(+). It participates in amino-acid biosynthesis; L-histidine biosynthesis; L-histidine from 5-phospho-alpha-D-ribose 1-diphosphate: step 5/9. In terms of biological role, IGPS catalyzes the conversion of PRFAR and glutamine to IGP, AICAR and glutamate. The HisF subunit catalyzes the cyclization activity that produces IGP and AICAR from PRFAR using the ammonia provided by the HisH subunit. The protein is Imidazole glycerol phosphate synthase subunit HisF of Chlorobium chlorochromatii (strain CaD3).